A 425-amino-acid chain; its full sequence is D-amino acid dehydrogenase (425 aa).

Residue 3–17 (VLVMGAGVIGVTTAY) participates in FAD binding.

Belongs to the DadA oxidoreductase family. FAD is required as a cofactor.

It carries out the reaction a D-alpha-amino acid + A + H2O = a 2-oxocarboxylate + AH2 + NH4(+). It functions in the pathway amino-acid degradation; D-alanine degradation; NH(3) and pyruvate from D-alanine: step 1/1. Oxidative deamination of D-amino acids. In Rhodopseudomonas palustris (strain HaA2), this protein is D-amino acid dehydrogenase.